The sequence spans 193 residues: Potassium-transporting ATPase KdpC subunit (193 aa).

Residues 14-34 (ITFTFLVLCGLVYPLIVTGIA) form a helical membrane-spanning segment.

The protein belongs to the KdpC family. In terms of assembly, the system is composed of three essential subunits: KdpA, KdpB and KdpC.

The protein resides in the cell membrane. Functionally, part of the high-affinity ATP-driven potassium transport (or Kdp) system, which catalyzes the hydrolysis of ATP coupled with the electrogenic transport of potassium into the cytoplasm. This subunit acts as a catalytic chaperone that increases the ATP-binding affinity of the ATP-hydrolyzing subunit KdpB by the formation of a transient KdpB/KdpC/ATP ternary complex. This is Potassium-transporting ATPase KdpC subunit from Bacillus cereus (strain B4264).